The chain runs to 172 residues: Cyclin-L1 (172 aa).

The interval 1–36 is disordered; sequence MASGPHSTATAAAAASSAAPSAGGSSSGTTTTTTTT. The cyclin-like stretch occupies residues 88–168; it reads ELIQAAGILL…LRGKSDQLHL (81 aa).

It belongs to the cyclin family. Cyclin L subfamily. In terms of assembly, interacts with POLR2A via its hyperphosphorylated C-terminal domain (CTD). Interacts with CDK11A, CDK11B, CDK12 and CDK13. May form a ternary complex with CDK11B and casein kinase II (CKII). Interacts with pre-mRNA-splicing factors, including at least SRSF1, SRSF2 and SRSF7/SLU7.

Its subcellular location is the nucleus speckle. It is found in the nucleus. The protein localises to the nucleoplasm. Its function is as follows. Involved in pre-mRNA splicing. Functions in association with cyclin-dependent kinases (CDKs). May play a role in the regulation of RNA polymerase II (pol II). Inhibited by the CDK-specific inhibitor CDKN1A/p21. In Pongo abelii (Sumatran orangutan), this protein is Cyclin-L1 (CCNL1).